Reading from the N-terminus, the 396-residue chain is Tyrosine--tRNA ligase (396 aa).

Residues 43-52 carry the 'HIGH' region motif; that stretch reads PSSPDIHLGH. The 'KMSKS' region motif lies at 227–231; sequence KMSKS. Lys230 is a binding site for ATP. In terms of domain architecture, S4 RNA-binding spans 338–396; it reads ICVIDFIIKADLAKSKSEARRLLEQGGVEINSAKISDPGTTVKCGDIIKAGKRRYSKAV.

It belongs to the class-I aminoacyl-tRNA synthetase family. TyrS type 2 subfamily. Homodimer.

It is found in the cytoplasm. It catalyses the reaction tRNA(Tyr) + L-tyrosine + ATP = L-tyrosyl-tRNA(Tyr) + AMP + diphosphate + H(+). Catalyzes the attachment of tyrosine to tRNA(Tyr) in a two-step reaction: tyrosine is first activated by ATP to form Tyr-AMP and then transferred to the acceptor end of tRNA(Tyr). The chain is Tyrosine--tRNA ligase from Dehalococcoides mccartyi (strain ATCC BAA-2266 / KCTC 15142 / 195) (Dehalococcoides ethenogenes (strain 195)).